A 264-amino-acid polypeptide reads, in one-letter code: Thymidylate synthase (264 aa).

Arg-21 contributes to the dUMP binding site. His-51 provides a ligand contact to (6R)-5,10-methylene-5,6,7,8-tetrahydrofolate. 126-127 lines the dUMP pocket; the sequence is RR. The Nucleophile role is filled by Cys-146. Residues 166 to 169, Asn-177, and 207 to 209 each bind dUMP; these read RSCD and HLY. Position 169 (Asp-169) interacts with (6R)-5,10-methylene-5,6,7,8-tetrahydrofolate. Residue Ala-263 coordinates (6R)-5,10-methylene-5,6,7,8-tetrahydrofolate.

Belongs to the thymidylate synthase family. Bacterial-type ThyA subfamily. In terms of assembly, homodimer.

It is found in the cytoplasm. It carries out the reaction dUMP + (6R)-5,10-methylene-5,6,7,8-tetrahydrofolate = 7,8-dihydrofolate + dTMP. Its pathway is pyrimidine metabolism; dTTP biosynthesis. Functionally, catalyzes the reductive methylation of 2'-deoxyuridine-5'-monophosphate (dUMP) to 2'-deoxythymidine-5'-monophosphate (dTMP) while utilizing 5,10-methylenetetrahydrofolate (mTHF) as the methyl donor and reductant in the reaction, yielding dihydrofolate (DHF) as a by-product. This enzymatic reaction provides an intracellular de novo source of dTMP, an essential precursor for DNA biosynthesis. The sequence is that of Thymidylate synthase from Shewanella baltica (strain OS185).